The chain runs to 162 residues: Interleukin-15 (162 aa).

Residues 1 to 29 (MRISKPHLRSISIQCYLCLLLNSHFLTEA) form the signal peptide. Positions 30–48 (GIHVFILGCFSAGLPKTEA) are excised as a propeptide. Cystine bridges form between Cys83–Cys133 and Cys90–Cys136. Residue Asn127 is glycosylated (N-linked (GlcNAc...) asparagine).

The protein belongs to the IL-15/IL-21 family. Most abundant in placenta and skeletal muscle. It is also detected in the heart, lung, liver and kidney. IL15-S21AA is preferentially expressed in tissues such as testis and thymus.

It localises to the secreted. It is found in the cytoplasm. The protein resides in the nucleus. Functionally, cytokine that plays a major role in the development of inflammatory and protective immune responses to microbial invaders and parasites by modulating immune cells of both the innate and adaptive immune systems. Stimulates the proliferation of natural killer cells, T-cells and B-cells and promotes the secretion of several cytokines. In monocytes, induces the production of IL8 and monocyte chemotactic protein 1/CCL2, two chemokines that attract neutrophils and monocytes respectively to sites of infection. Unlike most cytokines, which are secreted in soluble form, IL15 is expressed in association with its high affinity IL15RA on the surface of IL15-producing cells and delivers signals to target cells that express IL2RB and IL2RG receptor subunits. Binding to its receptor triggers the phosphorylation of JAK1 and JAK3 and the recruitment and subsequent phosphorylation of signal transducer and activator of transcription-3/STAT3 and STAT5. In mast cells, induces the rapid tyrosine phosphorylation of STAT6 and thereby controls mast cell survival and release of cytokines such as IL4. This is Interleukin-15 (IL15) from Homo sapiens (Human).